Consider the following 235-residue polypeptide: Large ribosomal subunit protein uL1c (235 aa).

This sequence belongs to the universal ribosomal protein uL1 family. As to quaternary structure, part of the 50S ribosomal subunit.

It is found in the plastid. Its subcellular location is the chloroplast. Its function is as follows. Binds directly to 23S rRNA. Might be involved in E site tRNA release (Potential). The sequence is that of Large ribosomal subunit protein uL1c (rpl1) from Gracilaria tenuistipitata var. liui (Red alga).